Here is a 257-residue protein sequence, read N- to C-terminus: Methylthioribulose-1-phosphate dehydratase (257 aa).

Residues 1 to 33 (MVSSQEKMASISDIIQKDEDSGSEKTESQDKEH) are disordered. Basic and acidic residues predominate over residues 15 to 33 (IQKDEDSGSEKTESQDKEH). Residue C107 coordinates substrate. H125 and H127 together coordinate Zn(2+). The Proton donor/acceptor role is filled by E149. Residue H205 participates in Zn(2+) binding.

The protein belongs to the aldolase class II family. MtnB subfamily. Requires Zn(2+) as cofactor.

It localises to the cytoplasm. The enzyme catalyses 5-(methylsulfanyl)-D-ribulose 1-phosphate = 5-methylsulfanyl-2,3-dioxopentyl phosphate + H2O. Its pathway is amino-acid biosynthesis; L-methionine biosynthesis via salvage pathway; L-methionine from S-methyl-5-thio-alpha-D-ribose 1-phosphate: step 2/6. In terms of biological role, catalyzes the dehydration of methylthioribulose-1-phosphate (MTRu-1-P) into 2,3-diketo-5-methylthiopentyl-1-phosphate (DK-MTP-1-P). Functions in the methionine salvage pathway. May play a role in apoptosis. The protein is Methylthioribulose-1-phosphate dehydratase of Esox lucius (Northern pike).